The primary structure comprises 313 residues: L-lactate dehydrogenase 1 (313 aa).

NAD(+) is bound by residues valine 15, aspartate 36, lysine 41, tyrosine 66, and 80 to 81 (GA). Substrate contacts are provided by glutamine 83 and arginine 89. NAD(+) is bound by residues serine 102, 119 to 121 (VSN), and serine 144. Substrate is bound at residue 121–124 (NPVD). Residue 149-152 (DTSR) coordinates substrate. 2 residues coordinate beta-D-fructose 1,6-bisphosphate: arginine 154 and histidine 169. Histidine 176 serves as the catalytic Proton acceptor. A Phosphotyrosine modification is found at tyrosine 222. Threonine 231 contributes to the substrate binding site.

It belongs to the LDH/MDH superfamily. LDH family. In terms of assembly, homotetramer.

It localises to the cytoplasm. The catalysed reaction is (S)-lactate + NAD(+) = pyruvate + NADH + H(+). Its pathway is fermentation; pyruvate fermentation to lactate; (S)-lactate from pyruvate: step 1/1. Its activity is regulated as follows. Allosterically activated by fructose 1,6-bisphosphate (FBP). Its function is as follows. Catalyzes the conversion of lactate to pyruvate. This is L-lactate dehydrogenase 1 from Clostridium acetobutylicum (strain ATCC 824 / DSM 792 / JCM 1419 / IAM 19013 / LMG 5710 / NBRC 13948 / NRRL B-527 / VKM B-1787 / 2291 / W).